Here is a 123-residue protein sequence, read N- to C-terminus: Histone H2B.1/H2B.2 (123 aa).

The interval 1–30 is disordered; sequence MPPKVSGKAAKKAGKAQKNITKGDKKKNRK. An O-linked (GlcNAc) serine glycan is attached at Ser-110. A Glycyl lysine isopeptide (Lys-Gly) (interchain with G-Cter in ubiquitin) cross-link involves residue Lys-118.

Belongs to the histone H2B family. The nucleosome is a histone octamer containing two molecules each of H2A, H2B, H3 and H4 assembled in one H3-H4 heterotetramer and two H2A-H2B heterodimers. The octamer wraps approximately 147 bp of DNA. Post-translationally, monoubiquitination of Lys-118 gives a specific tag for epigenetic transcriptional activation and is also prerequisite for histone H3 'Lys-4' and 'Lys-79' methylation. GlcNAcylation at Ser-110 promotes monoubiquitination of Lys-118. It fluctuates in response to extracellular glucose, and associates with transcribed genes.

The protein resides in the nucleus. It localises to the chromosome. Core component of nucleosome. Nucleosomes wrap and compact DNA into chromatin, limiting DNA accessibility to the cellular machineries which require DNA as a template. Histones thereby play a central role in transcription regulation, DNA repair, DNA replication and chromosomal stability. DNA accessibility is regulated via a complex set of post-translational modifications of histones, also called histone code, and nucleosome remodeling. This chain is Histone H2B.1/H2B.2, found in Tigriopus californicus (Marine copepod).